The following is a 179-amino-acid chain: Large ribosomal subunit protein uL5 (179 aa).

The protein belongs to the universal ribosomal protein uL5 family. Part of the 50S ribosomal subunit; part of the 5S rRNA/L5/L18/L25 subcomplex. Contacts the 5S rRNA and the P site tRNA. Forms a bridge to the 30S subunit in the 70S ribosome.

This is one of the proteins that bind and probably mediate the attachment of the 5S RNA into the large ribosomal subunit, where it forms part of the central protuberance. In the 70S ribosome it contacts protein S13 of the 30S subunit (bridge B1b), connecting the 2 subunits; this bridge is implicated in subunit movement. Contacts the P site tRNA; the 5S rRNA and some of its associated proteins might help stabilize positioning of ribosome-bound tRNAs. In Geobacter sp. (strain M21), this protein is Large ribosomal subunit protein uL5.